Reading from the N-terminus, the 375-residue chain is Lipid-A-disaccharide synthase (375 aa).

Belongs to the LpxB family.

The enzyme catalyses a lipid X + a UDP-2-N,3-O-bis[(3R)-3-hydroxyacyl]-alpha-D-glucosamine = a lipid A disaccharide + UDP + H(+). It functions in the pathway bacterial outer membrane biogenesis; LPS lipid A biosynthesis. Condensation of UDP-2,3-diacylglucosamine and 2,3-diacylglucosamine-1-phosphate to form lipid A disaccharide, a precursor of lipid A, a phosphorylated glycolipid that anchors the lipopolysaccharide to the outer membrane of the cell. In Pseudomonas putida (strain ATCC 700007 / DSM 6899 / JCM 31910 / BCRC 17059 / LMG 24140 / F1), this protein is Lipid-A-disaccharide synthase.